A 489-amino-acid chain; its full sequence is GDP-fucose protein O-fucosyltransferase 4 (489 aa).

The Cytoplasmic portion of the chain corresponds to Met-1–Glu-7. A helical; Signal-anchor for type II membrane protein transmembrane segment spans residues Ala-8 to Ser-24. Over Gly-25–Leu-489 the chain is Lumenal. N-linked (GlcNAc...) asparagine glycosylation is present at Asn-162. A disulfide bond links Cys-385 and Cys-388.

This sequence belongs to the glycosyltransferase 10 family. In terms of tissue distribution, widely expressed. Expressed at slightly higher level in heart, kidney and lung.

It is found in the endoplasmic reticulum membrane. The enzyme catalyses L-threonyl-[protein] + GDP-beta-L-fucose = 3-O-(alpha-L-fucosyl)-L-threonyl-[protein] + GDP + H(+). The catalysed reaction is L-seryl-[protein] + GDP-beta-L-fucose = 3-O-(alpha-L-fucosyl)-L-seryl-[protein] + GDP + H(+). The protein operates within protein modification; protein glycosylation. Functionally, protein O-fucosyltransferase that specifically catalyzes O-fucosylation of serine or threonine residues in EMI domains of target proteins, such as MMRN1, MMRN2 and EMID1. Attaches fucose through an O-glycosidic linkage. O-fucosylation of EMI domain-containing proteins may be required for facilitating protein folding and secretion. Also shows minor alpha-(1,3)-fucosyltransferase activity toward activity toward biantennary N-glycan acceptors. However, this was tested with a library of synthetic substrates and this activity is unsure in vivo. This chain is GDP-fucose protein O-fucosyltransferase 4 (Fut11), found in Mus musculus (Mouse).